We begin with the raw amino-acid sequence, 141 residues long: Large ribosomal subunit protein uL11 (141 aa).

It belongs to the universal ribosomal protein uL11 family. Part of the ribosomal stalk of the 50S ribosomal subunit. Interacts with L10 and the large rRNA to form the base of the stalk. L10 forms an elongated spine to which L12 dimers bind in a sequential fashion forming a multimeric L10(L12)X complex. Post-translationally, one or more lysine residues are methylated.

Forms part of the ribosomal stalk which helps the ribosome interact with GTP-bound translation factors. This is Large ribosomal subunit protein uL11 from Geobacillus kaustophilus (strain HTA426).